The following is a 279-amino-acid chain: Conserved oligomeric Golgi complex subunit 7 (279 aa).

Component of the conserved oligomeric Golgi (COG or Sec34/Sec35) complex which consists of eight different proteins COG1-COG8.

It is found in the golgi apparatus membrane. In terms of biological role, acts as a component of the peripheral membrane COG complex that is involved in intra-Golgi protein trafficking. COG is located at the cis-Golgi, and regulates tethering of retrograde intra-Golgi vesicles and possibly a number of other membrane trafficking events. In Saccharomyces cerevisiae (strain ATCC 204508 / S288c) (Baker's yeast), this protein is Conserved oligomeric Golgi complex subunit 7 (COG7).